The following is a 243-amino-acid chain: Small ribosomal subunit protein uS2c (243 aa).

A disordered region spans residues 224–243; that stretch reads GNNGKVSSDQEDTQELQTVQ.

It belongs to the universal ribosomal protein uS2 family.

It is found in the plastid. The protein localises to the chloroplast. This Rhodomonas salina (Cryptomonas salina) protein is Small ribosomal subunit protein uS2c (rps2).